The following is a 255-amino-acid chain: Large ribosomal subunit protein uL4 (255 aa).

The protein belongs to the universal ribosomal protein uL4 family. In terms of assembly, part of the 50S ribosomal subunit.

In terms of biological role, one of the primary rRNA binding proteins, this protein initially binds near the 5'-end of the 23S rRNA. It is important during the early stages of 50S assembly. It makes multiple contacts with different domains of the 23S rRNA in the assembled 50S subunit and ribosome. Forms part of the polypeptide exit tunnel. The protein is Large ribosomal subunit protein uL4 of Thermococcus gammatolerans (strain DSM 15229 / JCM 11827 / EJ3).